Consider the following 161-residue polypeptide: Vitamin K epoxide reductase complex subunit 1 (161 aa).

Topologically, residues 1–9 are cytoplasmic; the sequence is MGTTWRSPG. A helical transmembrane segment spans residues 10 to 29; sequence RLRLALCLAGLALSLYALHV. Residues 30-80 are Lumenal-facing; it reads KAARARNEDYRALCDVGTAISCSRVFSSRWGRGFGLVEHVLGADSILNQSN. C43 and C51 are joined by a disulfide. N80 serves as a coordination point for (S)-warfarin. A helical transmembrane segment spans residues 81–95; sequence SIFGCMFYTIQLLLG. At 96–100 the chain is on the cytoplasmic side; sequence CLRGR. A helical membrane pass occupies residues 101–128; sequence WASILLILSSLVSVAGSLYLAWILFFVL. Residues 129-131 lie on the Lumenal side of the membrane; sequence YDF. The cysteines at positions 132 and 135 are disulfide-linked. Residues 132-153 form a helical membrane-spanning segment; it reads CIVCITTYAINAGLMLLSFQKV. The phylloquinone site is built by C135 and Y139. Y139 is a binding site for (S)-warfarin. The Cytoplasmic portion of the chain corresponds to 154-161; the sequence is PEHKVKKP.

This sequence belongs to the VKOR family. As to expression, highly expressed in liver. Detected at lower levels in lung, kidney and testis.

It is found in the endoplasmic reticulum membrane. The catalysed reaction is phylloquinone + [protein]-disulfide + H2O = 2,3-epoxyphylloquinone + [protein]-dithiol. The enzyme catalyses phylloquinol + [protein]-disulfide = phylloquinone + [protein]-dithiol. Inhibited by warfarin (coumadin). Warfarin locks VKORC1 in both redox states into the closed conformation. In terms of biological role, involved in vitamin K metabolism. Catalytic subunit of the vitamin K epoxide reductase (VKOR) complex which reduces inactive vitamin K 2,3-epoxide to active vitamin K. Vitamin K is required for the gamma-carboxylation of various proteins, including clotting factors, and is required for normal blood coagulation, but also for normal bone development. The protein is Vitamin K epoxide reductase complex subunit 1 (Vkorc1) of Rattus norvegicus (Rat).